The following is a 72-amino-acid chain: Translation initiation factor IF-1 (72 aa).

Residues 1–72 form the S1-like domain; that stretch reads MSKDDSIEFE…TKGRITYRMK (72 aa).

It belongs to the IF-1 family. As to quaternary structure, component of the 30S ribosomal translation pre-initiation complex which assembles on the 30S ribosome in the order IF-2 and IF-3, IF-1 and N-formylmethionyl-tRNA(fMet); mRNA recruitment can occur at any time during PIC assembly.

Its subcellular location is the cytoplasm. Its function is as follows. One of the essential components for the initiation of protein synthesis. Stabilizes the binding of IF-2 and IF-3 on the 30S subunit to which N-formylmethionyl-tRNA(fMet) subsequently binds. Helps modulate mRNA selection, yielding the 30S pre-initiation complex (PIC). Upon addition of the 50S ribosomal subunit IF-1, IF-2 and IF-3 are released leaving the mature 70S translation initiation complex. The chain is Translation initiation factor IF-1 from Xanthomonas campestris pv. campestris (strain 8004).